The sequence spans 406 residues: Suppressor protein SRP40 (406 aa).

A compositionally biased stretch (basic and acidic residues) spans 1–25; sequence MASKKIKVDEVPKLSVKEKEIEEKS. The segment at 1–335 is disordered; it reads MASKKIKVDE…EIKEGQRKHF (335 aa). Residues 26–115 show a composition bias toward low complexity; that stretch reads SSSSSSSSSS…SSSSSSSSDE (90 aa). The span at 125–148 shows a compositional bias: basic and acidic residues; that stretch reads ETKKRARESDNEDAKETKKAKTEP. A Phosphoserine modification is found at Ser-133. 4 stretches are compositionally biased toward low complexity: residues 149–168, 176–186, 194–233, and 243–268; these read ESSSSSESSSSGSSSSSESE, DSSSSSSSSSD, DSQSSSSSSSSDSSSDSDSSSSDSSSDSDSSSSSSSSSSD, and DSDSSGSSDSSSSSDSSSDESTSSDS. A compositionally biased stretch (basic and acidic residues) spans 283–297; it reads LETKEATADESKAEE. Thr-289 is modified (phosphothreonine). At Ser-293 the chain carries Phosphoserine. Over residues 298–316 the composition is skewed to low complexity; that stretch reads TPASSNESTPSASSSSSAN. Over residues 325–335 the composition is skewed to basic and acidic residues; that stretch reads DEIKEGQRKHF. At Ser-394 the chain carries Phosphoserine.

Pyrophosphorylated by 5-diphosphoinositol pentakisphosphate (5-IP7). Serine pyrophosphorylation is achieved by Mg(2+)-dependent, but enzyme independent transfer of a beta-phosphate from a inositol pyrophosphate to a pre-phosphorylated serine residue.

Not known; weak suppressor of a mutant of the subunit AC40 of DNA dependent RNA polymerase I and III. This is Suppressor protein SRP40 (SRP40) from Saccharomyces cerevisiae (strain ATCC 204508 / S288c) (Baker's yeast).